The following is a 500-amino-acid chain: uncharacterized protein (500 aa).

The first 20 residues, 1 to 20 (MHSIIFKAAVALLGVSTAAG), serve as a signal peptide directing secretion. Asparagine 43 carries an N-linked (GlcNAc...) asparagine glycan. An FAD-binding PCMH-type domain is found at 60 to 232 (TALRPDCIIA…TAFTVKTHTQ (173 aa)). Pros-8alpha-FAD histidine is present on histidine 98. Asparagine 194, asparagine 201, asparagine 246, asparagine 299, and asparagine 414 each carry an N-linked (GlcNAc...) asparagine glycan.

Belongs to the oxygen-dependent FAD-linked oxidoreductase family. FAD serves as cofactor.

It is found in the secreted. This is an uncharacterized protein from Arthroderma benhamiae (strain ATCC MYA-4681 / CBS 112371) (Trichophyton mentagrophytes).